The sequence spans 146 residues: UPF0178 protein OB0454 (146 aa).

Belongs to the UPF0178 family.

This chain is UPF0178 protein OB0454, found in Oceanobacillus iheyensis (strain DSM 14371 / CIP 107618 / JCM 11309 / KCTC 3954 / HTE831).